Here is an 86-residue protein sequence, read N- to C-terminus: Small ribosomal subunit protein eS27y (86 aa).

The C4-type zinc-finger motif lies at C39–C61.

This sequence belongs to the eukaryotic ribosomal protein eS27 family. The cofactor is Zn(2+).

May be involved in the elimination of damaged mRNA after UV irradiation. This is Small ribosomal subunit protein eS27y (RPS27B) from Arabidopsis thaliana (Mouse-ear cress).